Consider the following 278-residue polypeptide: Polyamine aminopropyltransferase (278 aa).

A PABS domain is found at 5–238 (ELWFTEQQTP…GLWSFTLGSK (234 aa)). Residue Gln34 coordinates S-methyl-5'-thioadenosine. The spermidine site is built by His65 and Asp89. Residues Glu109 and 140 to 141 (DG) each bind S-methyl-5'-thioadenosine. Residue Asp158 is the Proton acceptor of the active site. 158–161 (DSTD) is a binding site for spermidine. Pro165 serves as a coordination point for S-methyl-5'-thioadenosine.

This sequence belongs to the spermidine/spermine synthase family. In terms of assembly, homodimer or homotetramer.

It localises to the cytoplasm. It catalyses the reaction S-adenosyl 3-(methylsulfanyl)propylamine + putrescine = S-methyl-5'-thioadenosine + spermidine + H(+). Its pathway is amine and polyamine biosynthesis; spermidine biosynthesis; spermidine from putrescine: step 1/1. Functionally, catalyzes the irreversible transfer of a propylamine group from the amino donor S-adenosylmethioninamine (decarboxy-AdoMet) to putrescine (1,4-diaminobutane) to yield spermidine. The chain is Polyamine aminopropyltransferase from Caldicellulosiruptor bescii (strain ATCC BAA-1888 / DSM 6725 / KCTC 15123 / Z-1320) (Anaerocellum thermophilum).